Here is a 223-residue protein sequence, read N- to C-terminus: MTMNIAKMIDHTLLKPEATEQQIVQLCTEAKQYGFASVCVNPTWVKTAARELSGTDVRVCTVIGFPLGATTPETKAFETTNAIENGAREVDMVINIGALKSGQDELVERDIRAVVEAAAGRALVKVIVETALLTDEEKVRACQLAVKAGADYVKTSTGFSGGGATVEDVALMRKTVGDRAGVKASGGVRDWKTAEAMINAGATRIGTSSGVAIVTGGTGRADY.

Residue Asp91 is the Proton donor/acceptor of the active site. Residue Lys154 is the Schiff-base intermediate with acetaldehyde of the active site. Residue Lys183 is the Proton donor/acceptor of the active site.

This sequence belongs to the DeoC/FbaB aldolase family. DeoC type 1 subfamily.

It localises to the cytoplasm. The enzyme catalyses 2-deoxy-D-ribose 5-phosphate = D-glyceraldehyde 3-phosphate + acetaldehyde. Its pathway is carbohydrate degradation; 2-deoxy-D-ribose 1-phosphate degradation; D-glyceraldehyde 3-phosphate and acetaldehyde from 2-deoxy-alpha-D-ribose 1-phosphate: step 2/2. In terms of biological role, catalyzes a reversible aldol reaction between acetaldehyde and D-glyceraldehyde 3-phosphate to generate 2-deoxy-D-ribose 5-phosphate. The protein is Deoxyribose-phosphate aldolase of Geobacillus kaustophilus (strain HTA426).